Consider the following 313-residue polypeptide: Hsp90 co-chaperone Cdc37-like 1 (313 aa).

The protein belongs to the CDC37 family. As to quaternary structure, forms complexes with Hsp70 and Hsp90.

The protein localises to the cytoplasm. Co-chaperone that binds to numerous proteins and promotes their interaction with Hsp70 and Hsp90. The chain is Hsp90 co-chaperone Cdc37-like 1 (cdc37l1) from Danio rerio (Zebrafish).